Consider the following 165-residue polypeptide: Large ribosomal subunit protein uL10 (165 aa).

The protein belongs to the universal ribosomal protein uL10 family. In terms of assembly, part of the ribosomal stalk of the 50S ribosomal subunit. The N-terminus interacts with L11 and the large rRNA to form the base of the stalk. The C-terminus forms an elongated spine to which L12 dimers bind in a sequential fashion forming a multimeric L10(L12)X complex.

Forms part of the ribosomal stalk, playing a central role in the interaction of the ribosome with GTP-bound translation factors. This Salmonella agona (strain SL483) protein is Large ribosomal subunit protein uL10.